A 287-amino-acid polypeptide reads, in one-letter code: 4-diphosphocytidyl-2-C-methyl-D-erythritol kinase (287 aa).

The active site involves Lys-11. 93-103 (PFGAGLGGGSS) is a binding site for ATP. Residue Asp-135 is part of the active site.

It belongs to the GHMP kinase family. IspE subfamily.

The enzyme catalyses 4-CDP-2-C-methyl-D-erythritol + ATP = 4-CDP-2-C-methyl-D-erythritol 2-phosphate + ADP + H(+). The protein operates within isoprenoid biosynthesis; isopentenyl diphosphate biosynthesis via DXP pathway; isopentenyl diphosphate from 1-deoxy-D-xylulose 5-phosphate: step 3/6. Its function is as follows. Catalyzes the phosphorylation of the position 2 hydroxy group of 4-diphosphocytidyl-2C-methyl-D-erythritol. This is 4-diphosphocytidyl-2-C-methyl-D-erythritol kinase from Pelodictyon phaeoclathratiforme (strain DSM 5477 / BU-1).